Consider the following 78-residue polypeptide: Exodeoxyribonuclease 7 small subunit (78 aa).

The protein belongs to the XseB family. Heterooligomer composed of large and small subunits.

It is found in the cytoplasm. The enzyme catalyses Exonucleolytic cleavage in either 5'- to 3'- or 3'- to 5'-direction to yield nucleoside 5'-phosphates.. In terms of biological role, bidirectionally degrades single-stranded DNA into large acid-insoluble oligonucleotides, which are then degraded further into small acid-soluble oligonucleotides. This Desulfitobacterium hafniense (strain Y51) protein is Exodeoxyribonuclease 7 small subunit.